The sequence spans 336 residues: Holliday junction branch migration complex subunit RuvB (336 aa).

The tract at residues 4–184 (ADRLISAGTT…FGIVQRLEFY (181 aa)) is large ATPase domain (RuvB-L). ATP is bound by residues I23, R24, G65, K68, T69, T70, 131-133 (EDY), R174, Y184, and R221. Residue T69 participates in Mg(2+) binding. The tract at residues 185–255 (QVPDLQYIVS…IAAQALDMLN (71 aa)) is small ATPAse domain (RuvB-S). The tract at residues 258–336 (AEGFDYMDRK…HFGITPPEMP (79 aa)) is head domain (RuvB-H). R294, R313, and R318 together coordinate DNA.

Belongs to the RuvB family. In terms of assembly, homohexamer. Forms an RuvA(8)-RuvB(12)-Holliday junction (HJ) complex. HJ DNA is sandwiched between 2 RuvA tetramers; dsDNA enters through RuvA and exits via RuvB. An RuvB hexamer assembles on each DNA strand where it exits the tetramer. Each RuvB hexamer is contacted by two RuvA subunits (via domain III) on 2 adjacent RuvB subunits; this complex drives branch migration. In the full resolvosome a probable DNA-RuvA(4)-RuvB(12)-RuvC(2) complex forms which resolves the HJ.

Its subcellular location is the cytoplasm. It catalyses the reaction ATP + H2O = ADP + phosphate + H(+). Functionally, the RuvA-RuvB-RuvC complex processes Holliday junction (HJ) DNA during genetic recombination and DNA repair, while the RuvA-RuvB complex plays an important role in the rescue of blocked DNA replication forks via replication fork reversal (RFR). RuvA specifically binds to HJ cruciform DNA, conferring on it an open structure. The RuvB hexamer acts as an ATP-dependent pump, pulling dsDNA into and through the RuvAB complex. RuvB forms 2 homohexamers on either side of HJ DNA bound by 1 or 2 RuvA tetramers; 4 subunits per hexamer contact DNA at a time. Coordinated motions by a converter formed by DNA-disengaged RuvB subunits stimulates ATP hydrolysis and nucleotide exchange. Immobilization of the converter enables RuvB to convert the ATP-contained energy into a lever motion, pulling 2 nucleotides of DNA out of the RuvA tetramer per ATP hydrolyzed, thus driving DNA branch migration. The RuvB motors rotate together with the DNA substrate, which together with the progressing nucleotide cycle form the mechanistic basis for DNA recombination by continuous HJ branch migration. Branch migration allows RuvC to scan DNA until it finds its consensus sequence, where it cleaves and resolves cruciform DNA. This chain is Holliday junction branch migration complex subunit RuvB, found in Escherichia coli O17:K52:H18 (strain UMN026 / ExPEC).